Reading from the N-terminus, the 359-residue chain is Dihydroorotate dehydrogenase (quinone) (359 aa).

Residues 65–69 and Thr-89 contribute to the FMN site; that span reads AGLDK. Lys-69 serves as a coordination point for substrate. Substrate is bound at residue 114 to 118; sequence NRLGF. Residues Asn-149 and Asn-182 each contribute to the FMN site. Asn-182 is a binding site for substrate. Catalysis depends on Ser-185, which acts as the Nucleophile. Asn-187 is a binding site for substrate. FMN is bound by residues Lys-233 and Thr-261. 262 to 263 lines the substrate pocket; the sequence is NT. Residues Gly-284, Gly-313, and 334-335 contribute to the FMN site; that span reads YT.

The protein belongs to the dihydroorotate dehydrogenase family. Type 2 subfamily. As to quaternary structure, monomer. Requires FMN as cofactor.

It is found in the cell membrane. The enzyme catalyses (S)-dihydroorotate + a quinone = orotate + a quinol. The protein operates within pyrimidine metabolism; UMP biosynthesis via de novo pathway; orotate from (S)-dihydroorotate (quinone route): step 1/1. Its function is as follows. Catalyzes the conversion of dihydroorotate to orotate with quinone as electron acceptor. The chain is Dihydroorotate dehydrogenase (quinone) from Paracidovorax citrulli (strain AAC00-1) (Acidovorax citrulli).